A 259-amino-acid chain; its full sequence is Glandular kallikrein-10 (259 aa).

A signal peptide spans 1–18 (MWFLILFLALSLGGIDAA). Residues 19 to 24 (PPGQSR) constitute a propeptide, activation peptide. The Peptidase S1 domain occupies 25–256 (IVGGYKCEKN…FTSWIKEVMK (232 aa)). Disulfide bonds link C31–C171, C48–C64, C150–C217, C182–C196, and C207–C232. H63 serves as the catalytic Charge relay system. N-linked (GlcNAc...) asparagine glycans are attached at residues N91 and N106. The active-site Charge relay system is D118. The active-site Charge relay system is the S211.

The protein belongs to the peptidase S1 family. Kallikrein subfamily. Heterodimer of a light chain and heavy chain linked by a disulfide bond. Probably N- and O-glycosylated. In terms of tissue distribution, kidney and submandibular gland, where it is found in the granular convoluted tubule and striated duct cells. It is likely that the enzyme is mainly synthesized in the granular convoluted tubules and then transferred to other tissues by release into the vasculature or interstitial space.

The enzyme catalyses Preferential cleavage of Arg-|-Xaa bonds in small molecule substrates. Highly selective action to release kallidin (lysyl-bradykinin) from kininogen involves hydrolysis of Met-|-Xaa or Leu-|-Xaa.. Functionally, glandular kallikreins cleave Met-Lys and Arg-Ser bonds in kininogen to release Lys-bradykinin. This protein may be involved in the regulation of renal function. The polypeptide is Glandular kallikrein-10 (Klk10) (Rattus norvegicus (Rat)).